Here is a 120-residue protein sequence, read N- to C-terminus: Large ribosomal subunit protein bL17 (120 aa).

It belongs to the bacterial ribosomal protein bL17 family. As to quaternary structure, part of the 50S ribosomal subunit. Contacts protein L32.

The sequence is that of Large ribosomal subunit protein bL17 from Geobacillus thermodenitrificans (strain NG80-2).